The primary structure comprises 337 residues: Phosphate acyltransferase (337 aa).

The protein belongs to the PlsX family. In terms of assembly, homodimer. Probably interacts with PlsY.

It is found in the cytoplasm. It carries out the reaction a fatty acyl-[ACP] + phosphate = an acyl phosphate + holo-[ACP]. It participates in lipid metabolism; phospholipid metabolism. In terms of biological role, catalyzes the reversible formation of acyl-phosphate (acyl-PO(4)) from acyl-[acyl-carrier-protein] (acyl-ACP). This enzyme utilizes acyl-ACP as fatty acyl donor, but not acyl-CoA. The chain is Phosphate acyltransferase from Latilactobacillus sakei subsp. sakei (strain 23K) (Lactobacillus sakei subsp. sakei).